The sequence spans 378 residues: Alcohol dehydrogenase 1 (378 aa).

Cys48 is a Zn(2+) binding site. 49-53 (HTDVL) contacts NAD(+). Positions 69, 99, 102, 105, 113, and 177 each coordinate Zn(2+). NAD(+)-binding positions include 202–207 (GIGTVG), Asp226, Lys231, 274–276 (TGV), 297–299 (IGA), and 321–323 (TTF).

The protein belongs to the zinc-containing alcohol dehydrogenase family. Class-IV subfamily. Homodimer. The cofactor is Zn(2+). In terms of tissue distribution, expressed in flowers and disk florets.

Its pathway is isoprenoid biosynthesis. This chain is Alcohol dehydrogenase 1, found in Tanacetum cinerariifolium (Dalmatian daisy).